We begin with the raw amino-acid sequence, 850 residues long: Pre-mRNA-splicing factor SYF1 (850 aa).

HAT repeat units follow at residues 25 to 57 (IQPS…FKQG), 58 to 90 (SPQK…ERTL), 100 to 132 (NSFE…FLMI), 134 to 168 (EKIT…FILK), 171 to 203 (IPSL…KIKE), 281 to 316 (AQFE…FEDS), 477 to 509 (KKQN…LEES), 511 to 543 (GTFH…YLEE), 545 to 579 (KYFE…KFIQ), 584 to 618 (MKLE…FEEQ), and 692 to 726 (GEID…FEKL). Residues 761–771 (NNKDDKDDKNQ) show a composition bias toward basic and acidic residues. A disordered region spans residues 761–837 (NNKDDKDDKN…EEEEEEEDQL (77 aa)). Residues 772 to 792 (QQKQQQQQQEKQQQQQQQQQQ) show a composition bias toward low complexity. Polar residues predominate over residues 793–812 (ASTLTKSKPVTVSLPETIQY). Residues 818–836 (NDDEINLDDDEEEEEEEDQ) show a composition bias toward acidic residues.

The protein belongs to the crooked-neck family. In terms of assembly, identified in the spliceosome C complex.

The protein resides in the nucleus. Involved in pre-mRNA splicing as component of the spliceosome. Involved in transcription-coupled repair (TCR), transcription and pre-mRNA splicing. The chain is Pre-mRNA-splicing factor SYF1 (xab2) from Dictyostelium discoideum (Social amoeba).